The following is a 1410-amino-acid chain: Ribosome-binding protein 1 (1410 aa).

Topologically, residues methionine 1–glutamine 7 are lumenal. Residues threonine 8–valine 28 traverse the membrane as a helical segment. At serine 29–valine 1410 the chain is on the cytoplasmic side. 2 disordered regions span residues asparagine 44–proline 90 and glutamine 129–alanine 152. Basic residues predominate over residues threonine 52–glutamate 63. Residues lysine 64 to proline 88 show a composition bias toward basic and acidic residues. Lysine 148 is covalently cross-linked (Glycyl lysine isopeptide (Lys-Gly) (interchain with G-Cter in SUMO2)). Serine 159 and serine 165 each carry phosphoserine. Disordered stretches follow at residues alanine 173 to leucine 648 and glutamine 895 to serine 925. 2 stretches are compositionally biased toward polar residues: residues threonine 191–serine 209 and threonine 225–glutamine 238. A run of 33 repeats spans residues threonine 197–glutamine 206, asparagine 207–proline 216, asparagine 217–proline 226, asparagine 227–proline 236, asparagine 237–proline 246, asparagine 247–proline 256, asparagine 257–glutamine 266, asparagine 267–proline 276, asparagine 277–proline 286, threonine 287–glutamine 296, asparagine 297–glutamine 306, asparagine 307–glutamine 316, asparagine 317–glutamine 326, asparagine 327–glutamine 336, asparagine 337–glutamine 346, asparagine 347–glutamine 356, asparagine 357–glutamine 366, asparagine 367–glutamine 376, asparagine 377–glutamine 386, asparagine 387–glutamine 396, asparagine 397–glutamine 406, asparagine 407–glutamine 416, asparagine 417–glutamine 426, asparagine 427–glutamine 436, asparagine 437–glutamine 446, asparagine 447–glutamine 456, asparagine 457–glutamine 466, asparagine 467–glutamine 476, asparagine 477–glutamine 486, asparagine 487–glutamine 496, asparagine 497–glutamine 506, asparagine 507–glutamine 516, and asparagine 517–glutamine 526. Positions threonine 197–serine 604 are 41 X 10 AA approximate tandem repeats of [TN]-Q-[GSA]-[KRQT]-K-[ATGSV]-[ED]-[GTAS]-[ATIS]-[PQTAS]. Threonine 225, threonine 235, threonine 245, and threonine 255 each carry phosphothreonine. 2 stretches are compositionally biased toward polar residues: residues alanine 265–glutamine 278 and alanine 295–glycine 519. The segment covering lysine 520–arginine 532 has biased composition (basic and acidic residues). One copy of the 34; approximate repeat lies at glycine 527–proline 534. Residue serine 533 is modified to Phosphoserine. Residues asparagine 535–proline 544 form repeat 35. A 36; approximate repeat occupies isoleucine 545–alanine 554. A compositionally biased stretch (polar residues) spans valine 553 to glycine 567. 2 tandem repeats follow at residues asparagine 555–threonine 564 and asparagine 565–proline 574. Positions lysine 568–glutamate 581 are enriched in basic and acidic residues. 2 positions are modified to phosphoserine: serine 573 and serine 583. Residues serine 575–proline 584 form a 39; approximate repeat. 2 consecutive repeat copies span residues asparagine 585–alanine 594 and asparagine 595–serine 604. Polar residues predominate over residues serine 602–valine 612. A Phosphoserine modification is found at serine 615. Lysine 620 participates in a covalent cross-link: Glycyl lysine isopeptide (Lys-Gly) (interchain with G-Cter in SUMO1). Serine 900 is modified (phosphoserine). Lysine 932 is subject to N6-acetyllysine. Residues serine 959 and serine 978 each carry the phosphoserine modification. Disordered regions lie at residues glycine 1093–serine 1122, glutamate 1260–proline 1287, glutamate 1330–aspartate 1362, and glutamine 1378–valine 1410. Serine 1276 and serine 1277 each carry phosphoserine. Composition is skewed to basic and acidic residues over residues serine 1347 to threonine 1360 and leucine 1381 to serine 1403.

It localises to the endoplasmic reticulum membrane. Acts as a ribosome receptor and mediates interaction between the ribosome and the endoplasmic reticulum membrane. This is Ribosome-binding protein 1 (RRBP1) from Homo sapiens (Human).